A 445-amino-acid chain; its full sequence is Phosphoglucosamine mutase (445 aa).

Catalysis depends on Ser-102, which acts as the Phosphoserine intermediate. Residues Ser-102, Asp-241, Asp-243, and Asp-245 each coordinate Mg(2+). Ser-102 is modified (phosphoserine).

The protein belongs to the phosphohexose mutase family. Requires Mg(2+) as cofactor. Post-translationally, activated by phosphorylation.

It carries out the reaction alpha-D-glucosamine 1-phosphate = D-glucosamine 6-phosphate. Its function is as follows. Catalyzes the conversion of glucosamine-6-phosphate to glucosamine-1-phosphate. The polypeptide is Phosphoglucosamine mutase (Enterobacter sp. (strain 638)).